The sequence spans 482 residues: ATP synthase subunit beta (482 aa).

162-169 (GGAGVGKT) contributes to the ATP binding site.

Belongs to the ATPase alpha/beta chains family. F-type ATPases have 2 components, CF(1) - the catalytic core - and CF(0) - the membrane proton channel. CF(1) has five subunits: alpha(3), beta(3), gamma(1), delta(1), epsilon(1). CF(0) has four main subunits: a(1), b(1), b'(1) and c(9-12).

The protein resides in the cellular thylakoid membrane. It catalyses the reaction ATP + H2O + 4 H(+)(in) = ADP + phosphate + 5 H(+)(out). Produces ATP from ADP in the presence of a proton gradient across the membrane. The catalytic sites are hosted primarily by the beta subunits. This is ATP synthase subunit beta from Trichormus variabilis (strain ATCC 29413 / PCC 7937) (Anabaena variabilis).